The following is a 257-amino-acid chain: Small ribosomal subunit protein uS2 (257 aa).

Residues 237–257 (MDEADGSEAEPEDPAAPESAE) form a disordered region. Residues 240–257 (ADGSEAEPEDPAAPESAE) show a composition bias toward acidic residues.

Belongs to the universal ribosomal protein uS2 family.

This chain is Small ribosomal subunit protein uS2, found in Chlorobium phaeovibrioides (strain DSM 265 / 1930) (Prosthecochloris vibrioformis (strain DSM 265)).